Here is a 335-residue protein sequence, read N- to C-terminus: Fructokinase-2 (335 aa).

Belongs to the carbohydrate kinase PfkB family. Expressed in roots, at higher levels in stems, and hardly detectable in leaves.

The catalysed reaction is D-fructose + ATP = D-fructose 6-phosphate + ADP + H(+). It functions in the pathway glycan biosynthesis; starch biosynthesis. Its activity is regulated as follows. Inhibited at high fructose. In terms of biological role, may play an important role in maintaining the flux of carbon towards starch formation. May also be involved in a sugar-sensing pathway. The protein is Fructokinase-2 (FRK2) of Zea mays (Maize).